The following is a 260-amino-acid chain: Triosephosphate isomerase (260 aa).

11 to 13 (NWK) serves as a coordination point for substrate. His103 serves as the catalytic Electrophile. Glu175 serves as the catalytic Proton acceptor. Substrate-binding positions include Gly181, Ser220, and 241–242 (GG).

The protein belongs to the triosephosphate isomerase family. In terms of assembly, homodimer.

The protein resides in the cytoplasm. The catalysed reaction is D-glyceraldehyde 3-phosphate = dihydroxyacetone phosphate. It functions in the pathway carbohydrate biosynthesis; gluconeogenesis. It participates in carbohydrate degradation; glycolysis; D-glyceraldehyde 3-phosphate from glycerone phosphate: step 1/1. Its function is as follows. Involved in the gluconeogenesis. Catalyzes stereospecifically the conversion of dihydroxyacetone phosphate (DHAP) to D-glyceraldehyde-3-phosphate (G3P). This is Triosephosphate isomerase from Shewanella pealeana (strain ATCC 700345 / ANG-SQ1).